Consider the following 208-residue polypeptide: FMN-dependent NADH:quinone oxidoreductase 1 (208 aa).

It belongs to the azoreductase type 1 family. Homodimer. FMN is required as a cofactor.

The enzyme catalyses 2 a quinone + NADH + H(+) = 2 a 1,4-benzosemiquinone + NAD(+). The catalysed reaction is N,N-dimethyl-1,4-phenylenediamine + anthranilate + 2 NAD(+) = 2-(4-dimethylaminophenyl)diazenylbenzoate + 2 NADH + 2 H(+). In terms of biological role, quinone reductase that provides resistance to thiol-specific stress caused by electrophilic quinones. Functionally, also exhibits azoreductase activity. Catalyzes the reductive cleavage of the azo bond in aromatic azo compounds to the corresponding amines. In Bacillus thuringiensis subsp. konkukian (strain 97-27), this protein is FMN-dependent NADH:quinone oxidoreductase 1.